Consider the following 357-residue polypeptide: Ferrochelatase (357 aa).

Fe cation-binding residues include H193 and E272.

It belongs to the ferrochelatase family.

The protein localises to the cytoplasm. It catalyses the reaction heme b + 2 H(+) = protoporphyrin IX + Fe(2+). It functions in the pathway porphyrin-containing compound metabolism; protoheme biosynthesis; protoheme from protoporphyrin-IX: step 1/1. In terms of biological role, catalyzes the ferrous insertion into protoporphyrin IX. In Hyphomonas neptunium (strain ATCC 15444), this protein is Ferrochelatase.